Here is a 396-residue protein sequence, read N- to C-terminus: Probable isocitrate dehydrogenase [NAD] gamma 2, mitochondrial (396 aa).

A mitochondrion-targeting transit peptide spans 1–25 (MLAVTSCSMKTVLQYAVFLGHSREV). Thr-117 serves as a coordination point for citrate. 3 residues coordinate substrate: Arg-133, Arg-164, and Asp-251. A Mn(2+)-binding site is contributed by Asp-251. Asn-321 provides a ligand contact to ADP.

This sequence belongs to the isocitrate and isopropylmalate dehydrogenases family. In terms of assembly, heterooligomer of subunits alpha (IDH3A), beta (IDH3B), and gamma (IDH3G) in the apparent ratio of 2:1:1. The heterodimer containing one IDH3A and one IDH3B subunit and the heterodimer containing one IDH3A and one IDH3G subunit assemble into a heterotetramer (which contains two subunits of IDH3A, one of IDH3B and one of IDH3G) and further into the heterooctamer. Requires Mg(2+) as cofactor. Mn(2+) serves as cofactor.

Its subcellular location is the mitochondrion. With respect to regulation, the heterotetramer and the heterodimer composed of IDH3A and IDH3G subunits can be allosterically activated by citrate (CIT) or/and ADP, and the two activators can act independently or synergistically. The heterodimer composed of IDH3A and IDH3B subunits cannot be allosterically regulated and the allosteric regulation of the heterotetramer is through the IDH3G subunit and not the IDH3B subunit. The IDH3G subunit contains the allosteric site which consists of a CIT-binding site and an ADP-binding site, and the binding of CIT and ADP causes conformational changes at the allosteric site which are transmitted to the active site in the catalytic subunit (IDH3A) through a cascade of conformational changes at the heterodimer interface, leading to stabilization of the isocitrate-binding at the active site and thus activation of the enzyme. ATP can activate the heterotetramer and the heterodimer composed of IDH3A and IDH3G subunits at low concentrations but inhibits their activities at high concentrations, whereas ATP exhibits only inhibitory effect on the heterodimer composed of IDH3A and IDH3B subunits. Its function is as follows. Regulatory subunit which plays a role in the allosteric regulation of the enzyme catalyzing the decarboxylation of isocitrate (ICT) into alpha-ketoglutarate. The heterodimer composed of the alpha (IDH3A) and beta (IDH3B) subunits and the heterodimer composed of the alpha (IDH3A) and gamma (IDH3G) subunits, have considerable basal activity but the full activity of the heterotetramer (containing two subunits of IDH3A, one of IDH3B and one of IDH3G) requires the assembly and cooperative function of both heterodimers. This is Probable isocitrate dehydrogenase [NAD] gamma 2, mitochondrial from Mus musculus (Mouse).